The chain runs to 390 residues: MGIVLKRAIAAGMKPFPNSTWHWSRTIRPFSQHLSSTCFLQQSSRFTSKRYLHLSTLTQQEKRFLPESELAKYKEYYQGLKSTVNEIPESVASKSPSLRTLHKRLQLPNELTYSTLSRCLTCPSAKLPDKINNPTKGAAFVNTVPTNKYLDNHGLNIMGKNLLSYHVTKSIIQKYPRLPTVVLNAAVNAYISEAVLAHIAKYWGIEVETTSVLSRYLKMEPFEFTLGRLKFFNNSLNSKDGIELITGKNFSETSALAMSVRSIIAAIWAVTEQKDSQAVYRFIDDHIMSRKLDITKMFQFEQPTRELAMLCRREGLEKPVSKLVAESGRLSKSPVFIVHVFSGEETLGEGYGSSLKEAKARAATDALMKWYCYEPLAQQEPVIDPGTVVV.

A mitochondrion-targeting transit peptide spans methionine 1–glutamine 59. Positions alanine 139 to isoleucine 205 constitute an RNase III domain. Positions glutamine 302–cysteine 372 constitute a DRBM domain.

This sequence belongs to the ribonuclease III family. Mitochondrion-specific ribosomal protein mL44 subfamily. As to quaternary structure, component of the mitochondrial large ribosomal subunit (mt-LSU). Mature yeast 74S mitochondrial ribosomes consist of a small (37S) and a large (54S) subunit. The 37S small subunit contains a 15S ribosomal RNA (15S mt-rRNA) and 34 different proteins. The 54S large subunit contains a 21S rRNA (21S mt-rRNA) and 46 different proteins. mL44 forms a heterodimer with mL57 and stabilizes rRNA expansion segments 1/2 at a membrane-facing protuberance close to the point of attachment of the ribosome to the translocon in the membrane.

Its subcellular location is the mitochondrion. Component of the mitochondrial ribosome (mitoribosome), a dedicated translation machinery responsible for the synthesis of mitochondrial genome-encoded proteins, including at least some of the essential transmembrane subunits of the mitochondrial respiratory chain. The mitoribosomes are attached to the mitochondrial inner membrane and translation products are cotranslationally integrated into the membrane. The sequence is that of Large ribosomal subunit protein mL44 (MRPL3) from Saccharomyces cerevisiae (strain ATCC 204508 / S288c) (Baker's yeast).